The chain runs to 327 residues: Succinylglutamate desuccinylase (327 aa).

Residues His53, Glu56, and His146 each coordinate Zn(2+). Glu209 is an active-site residue.

It belongs to the AspA/AstE family. Succinylglutamate desuccinylase subfamily. It depends on Zn(2+) as a cofactor.

The enzyme catalyses N-succinyl-L-glutamate + H2O = L-glutamate + succinate. It functions in the pathway amino-acid degradation; L-arginine degradation via AST pathway; L-glutamate and succinate from L-arginine: step 5/5. Transforms N(2)-succinylglutamate into succinate and glutamate. In Serratia proteamaculans (strain 568), this protein is Succinylglutamate desuccinylase.